A 199-amino-acid polypeptide reads, in one-letter code: Imidazoleglycerol-phosphate dehydratase (199 aa).

It belongs to the imidazoleglycerol-phosphate dehydratase family.

It localises to the cytoplasm. It catalyses the reaction D-erythro-1-(imidazol-4-yl)glycerol 3-phosphate = 3-(imidazol-4-yl)-2-oxopropyl phosphate + H2O. It functions in the pathway amino-acid biosynthesis; L-histidine biosynthesis; L-histidine from 5-phospho-alpha-D-ribose 1-diphosphate: step 6/9. This Rhodospirillum rubrum (strain ATCC 11170 / ATH 1.1.1 / DSM 467 / LMG 4362 / NCIMB 8255 / S1) protein is Imidazoleglycerol-phosphate dehydratase.